Reading from the N-terminus, the 270-residue chain is 3-phenylpropionate-dihydrodiol/cinnamic acid-dihydrodiol dehydrogenase (270 aa).

10–34 (FITGGGSGLGLALVERFIEEGAQVA) provides a ligand contact to NAD(+). S143 provides a ligand contact to substrate. Y156 functions as the Proton acceptor in the catalytic mechanism.

The protein belongs to the short-chain dehydrogenases/reductases (SDR) family.

The enzyme catalyses 3-(cis-5,6-dihydroxycyclohexa-1,3-dien-1-yl)propanoate + NAD(+) = 3-(2,3-dihydroxyphenyl)propanoate + NADH + H(+). It carries out the reaction (2E)-3-(cis-5,6-dihydroxycyclohexa-1,3-dien-1-yl)prop-2-enoate + NAD(+) = (2E)-3-(2,3-dihydroxyphenyl)prop-2-enoate + NADH + H(+). The protein operates within aromatic compound metabolism; 3-phenylpropanoate degradation. Its function is as follows. Converts 3-phenylpropionate-dihydrodiol (PP-dihydrodiol) and cinnamic acid-dihydrodiol (CI-dihydrodiol) into 3-(2,3-dihydroxylphenyl)propanoic acid (DHPP) and 2,3-dihydroxicinnamic acid (DHCI), respectively. The sequence is that of 3-phenylpropionate-dihydrodiol/cinnamic acid-dihydrodiol dehydrogenase from Escherichia coli (strain ATCC 8739 / DSM 1576 / NBRC 3972 / NCIMB 8545 / WDCM 00012 / Crooks).